The following is a 473-amino-acid chain: Bifunctional protein HldE (473 aa).

The tract at residues 1-318 (MKLSMPRFDQ…RAIQREEGSE (318 aa)) is ribokinase. 194–197 (NLSE) contacts ATP. Asp-263 is a catalytic residue. Positions 343–473 (FTNGCFDILH…TAIVEKIRKH (131 aa)) are cytidylyltransferase.

In the N-terminal section; belongs to the carbohydrate kinase PfkB family. This sequence in the C-terminal section; belongs to the cytidylyltransferase family. As to quaternary structure, homodimer.

The catalysed reaction is D-glycero-beta-D-manno-heptose 7-phosphate + ATP = D-glycero-beta-D-manno-heptose 1,7-bisphosphate + ADP + H(+). It carries out the reaction D-glycero-beta-D-manno-heptose 1-phosphate + ATP + H(+) = ADP-D-glycero-beta-D-manno-heptose + diphosphate. It participates in nucleotide-sugar biosynthesis; ADP-L-glycero-beta-D-manno-heptose biosynthesis; ADP-L-glycero-beta-D-manno-heptose from D-glycero-beta-D-manno-heptose 7-phosphate: step 1/4. Its pathway is nucleotide-sugar biosynthesis; ADP-L-glycero-beta-D-manno-heptose biosynthesis; ADP-L-glycero-beta-D-manno-heptose from D-glycero-beta-D-manno-heptose 7-phosphate: step 3/4. Functionally, catalyzes the phosphorylation of D-glycero-D-manno-heptose 7-phosphate at the C-1 position to selectively form D-glycero-beta-D-manno-heptose-1,7-bisphosphate. In terms of biological role, catalyzes the ADP transfer from ATP to D-glycero-beta-D-manno-heptose 1-phosphate, yielding ADP-D-glycero-beta-D-manno-heptose. This Pseudomonas entomophila (strain L48) protein is Bifunctional protein HldE.